The primary structure comprises 433 residues: MSDVLFIEGGRVIDPASGVDGVRTVVIRDGKVAEVAERVERPRDARAVDARNRWVTPGFVDLHVHLREPGQEYKETVATGARAAVAGGFTAVCAMPNTKPVNDCAAVTELVLARAAAAGLARVYPVGAISRGSNGEELAEYGELKASGCVALSDDGRPVMSSALMRRALEYARAFGLPLTVHEEDLHLVGKGVMHEGAAATRLGLKGIPSQAEDVMVLRDIALVELTGGRLHVAHVSTAGAVRAIREAKRRGLPVTGEVTPHHLALTDDDVGASGYSTDFKMNPPLRSAEDVRACREGLADGTLDAIATDHAPHSAVEKDVEFDAAANGIVGLETAFSVCLGLVREGALTERRLVEALTVGPARAFGLPAGTLARGAAADVAVLDAAAEWTVDPARLHSKGRNTPWKGRRLAGRCTHTIVGGRIVHEEGKADR.

Zn(2+)-binding residues include His-63 and His-65. Residues 65-67 (HLR) and Asn-97 each bind substrate. The Zn(2+) site is built by Asp-155, His-182, and His-235. Asn-283 lines the substrate pocket. Asp-310 contacts Zn(2+). The active site involves Asp-310. His-314 is a binding site for substrate.

This sequence belongs to the metallo-dependent hydrolases superfamily. DHOase family. Class I DHOase subfamily. The cofactor is Zn(2+).

It carries out the reaction (S)-dihydroorotate + H2O = N-carbamoyl-L-aspartate + H(+). It participates in pyrimidine metabolism; UMP biosynthesis via de novo pathway; (S)-dihydroorotate from bicarbonate: step 3/3. In terms of biological role, catalyzes the reversible cyclization of carbamoyl aspartate to dihydroorotate. The sequence is that of Dihydroorotase from Anaeromyxobacter sp. (strain K).